Reading from the N-terminus, the 57-residue chain is Enolase (57 aa).

Catalysis depends on E25, which acts as the Proton donor.

This sequence belongs to the enolase family. Mg(2+) serves as cofactor.

It is found in the cytoplasm. The protein resides in the secreted. Its subcellular location is the cell surface. The enzyme catalyses (2R)-2-phosphoglycerate = phosphoenolpyruvate + H2O. Its pathway is carbohydrate degradation; glycolysis; pyruvate from D-glyceraldehyde 3-phosphate: step 4/5. Catalyzes the reversible conversion of 2-phosphoglycerate (2-PG) into phosphoenolpyruvate (PEP). It is essential for the degradation of carbohydrates via glycolysis. This Clostridioides difficile (Peptoclostridium difficile) protein is Enolase.